The following is a 526-amino-acid chain: Probable carboxypeptidase 2 (526 aa).

The first 21 residues, 1–21, serve as a signal peptide directing secretion; sequence MVAYRLLALISLGLGSHCASA. Asn-46 carries an N-linked (GlcNAc...) asparagine glycan. The interval 53-76 is disordered; the sequence is PAFTSPGTVPRGFSDGTSGPTRDE. One can recognise a Peptidase M14 domain in the interval 71–351; the sequence is GPTRDETMEG…VMAKSILQTA (281 aa). Residue Asn-116 is glycosylated (N-linked (GlcNAc...) asparagine). Zn(2+) contacts are provided by His-136, Glu-139, and His-224. The active-site Proton donor/acceptor is the Glu-322. N-linked (GlcNAc...) asparagine glycans are attached at residues Asn-393 and Asn-459.

This sequence belongs to the peptidase M14 family. Zn(2+) is required as a cofactor.

The protein resides in the secreted. Extracellular metalloprotease that contributes to pathogenicity. This chain is Probable carboxypeptidase 2 (MCPB), found in Arthroderma benhamiae (strain ATCC MYA-4681 / CBS 112371) (Trichophyton mentagrophytes).